Here is a 91-residue protein sequence, read N- to C-terminus: UPF0250 protein PSEEN4821 (91 aa).

Belongs to the UPF0250 family.

The polypeptide is UPF0250 protein PSEEN4821 (Pseudomonas entomophila (strain L48)).